A 385-amino-acid chain; its full sequence is Calcium/calmodulin-dependent protein kinase type 1D (385 aa).

Positions 23–279 constitute a Protein kinase domain; the sequence is FEFKETLGTG…CEQAARHPWI (257 aa). Residues 29–37 and K52 contribute to the ATP site; that span reads LGTGAFSEV. Residue K113 forms a Glycyl lysine isopeptide (Lys-Gly) (interchain with G-Cter in SUMO2) linkage. Phosphoserine is present on S122. D144 acts as the Proton acceptor in catalysis. The residue at position 180 (T180) is a Phosphothreonine; by CaMKK1 and CaMKK2. Residues 279–319 are autoinhibitory domain; it reads IAGDTALSKNIHESVSAQIRKNFAKSKWRQAFNATAVVRHM. The segment at 299–320 is calmodulin-binding; it reads KNFAKSKWRQAFNATAVVRHMR. The short motif at 318-324 is the Nuclear export signal element; sequence HMRRLQL. Residues 363–385 form a disordered region; it reads VAGVGAERRPRPTTVTTGHTGSK. The segment covering 375–385 has biased composition (polar residues); the sequence is TTVTTGHTGSK.

It belongs to the protein kinase superfamily. CAMK Ser/Thr protein kinase family. CaMK subfamily. Expressed ubiquitously with high levels in brain and low levels in kidney. Isoform 2 is highly expressed in brain compared to other tissues. In hematopoietic cell lines predominant expression was detected in T and EC cells.

The protein resides in the cytoplasm. The protein localises to the nucleus. The catalysed reaction is L-seryl-[protein] + ATP = O-phospho-L-seryl-[protein] + ADP + H(+). It catalyses the reaction L-threonyl-[protein] + ATP = O-phospho-L-threonyl-[protein] + ADP + H(+). Activated by Ca(2+)/calmodulin. Binding of calmodulin results in conformational change that relieves intrasteric autoinhibition and allows phosphorylation of Thr-180 within the activation loop by CaMKK1 or CaMKK2. Phosphorylation of Thr-180 results in several fold increase in total activity. Unlike CaMK4, may be unable to exhibit autonomous activity after Ca(2+)/calmodulin activation. Calcium/calmodulin-dependent protein kinase that operates in the calcium-triggered CaMKK-CaMK1 signaling cascade and, upon calcium influx, activates CREB-dependent gene transcription, regulates calcium-mediated granulocyte function and respiratory burst and promotes basal dendritic growth of hippocampal neurons. In neutrophil cells, required for cytokine-induced proliferative responses and activation of the respiratory burst. Activates the transcription factor CREB1 in hippocampal neuron nuclei. May play a role in apoptosis of erythroleukemia cells. In vitro, phosphorylates transcription factor CREM isoform Beta. Isoform 1 but not isoform 2 activates CREB1. In Mus musculus (Mouse), this protein is Calcium/calmodulin-dependent protein kinase type 1D (Camk1d).